A 618-amino-acid polypeptide reads, in one-letter code: uncharacterized protein (618 aa).

The segment at 1 to 45 (MSSKSASKLKREAKKAERLAAKGESVKPSKKNGTKNGKDKEVDGV) is disordered. Basic and acidic residues-rich tracts occupy residues 14-27 (KKAE…ESVK) and 36-45 (NGKDKEVDGV). Phosphoserine occurs at positions 50 and 53. Phosphothreonine is present on T54. Residues S55 and S64 each carry the phosphoserine modification. ABC transporter domains are found at residues 76–325 (IKID…LKQQ) and 388–609 (IAFN…QSRD). Residues 108–115 (GDNGSGKS) and 423–430 (GKNGTGKS) contribute to the ATP site.

It belongs to the ABC transporter superfamily.

It is found in the cytoplasm. This is an uncharacterized protein from Schizosaccharomyces pombe (strain 972 / ATCC 24843) (Fission yeast).